The chain runs to 287 residues: uncharacterized protein (287 aa).

2 consecutive transmembrane segments (helical) span residues 12 to 32 and 217 to 237; these read IILLFGMLVFLVLLGLGGAAL and YTIGAITLVSVSGGVLAVLIV.

It is found in the cell membrane. This is an uncharacterized protein from Mycoplasma pneumoniae (strain ATCC 29342 / M129 / Subtype 1) (Mycoplasmoides pneumoniae).